We begin with the raw amino-acid sequence, 71 residues long: Non-disulfide-bridged peptide 5.5 (71 aa).

An N-terminal signal peptide occupies residues 1–23 (MKTQFIVLIVAIVFLQLLSQSEA). Leucine amide is present on Leu-36. Positions 40 to 71 (DLRHLDLDQFDDMFDQPEISAADMKFLQDLLR) are excised as a propeptide.

This sequence belongs to the non-disulfide-bridged peptide (NDBP) superfamily. Short antimicrobial peptide (group 4) family. In terms of tissue distribution, expressed by the venom gland.

The protein resides in the secreted. It is found in the target cell membrane. In terms of biological role, antimicrobial peptide. Is active on Mycobacterium abscessus subsp. massiliense (MBC=200 uM), a rapidly growing and emerging pathogen associated with healthcare infections. Also shows antifungal activities. Has a weak hemolytic activity on human erythrocytes (10% at 610 uM), indicating a low toxicity (therapeutic index (TI)=3.05). In addition, treatment of infected macrophages reduces the bacterial load. In vivo, treatment of M.abscessus-infected mice causes a decrease in the bacterial load in the lungs and liver. The polypeptide is Non-disulfide-bridged peptide 5.5 (Hoffmannihadrurus gertschi (Scorpion)).